The primary structure comprises 365 residues: Peptide chain release factor 2 (365 aa).

Q251 is subject to N5-methylglutamine.

The protein belongs to the prokaryotic/mitochondrial release factor family. Methylated by PrmC. Methylation increases the termination efficiency of RF2.

Its subcellular location is the cytoplasm. Peptide chain release factor 2 directs the termination of translation in response to the peptide chain termination codons UGA and UAA. This chain is Peptide chain release factor 2, found in Campylobacter jejuni (strain RM1221).